Here is a 311-residue protein sequence, read N- to C-terminus: Methionyl-tRNA formyltransferase (311 aa).

Residue 109–112 participates in (6S)-5,6,7,8-tetrahydrofolate binding; that stretch reads SLLP.

It belongs to the Fmt family.

It catalyses the reaction L-methionyl-tRNA(fMet) + (6R)-10-formyltetrahydrofolate = N-formyl-L-methionyl-tRNA(fMet) + (6S)-5,6,7,8-tetrahydrofolate + H(+). In terms of biological role, attaches a formyl group to the free amino group of methionyl-tRNA(fMet). The formyl group appears to play a dual role in the initiator identity of N-formylmethionyl-tRNA by promoting its recognition by IF2 and preventing the misappropriation of this tRNA by the elongation apparatus. This is Methionyl-tRNA formyltransferase from Staphylococcus aureus (strain bovine RF122 / ET3-1).